Here is an 87-residue protein sequence, read N- to C-terminus: Small ribosomal subunit protein bS20 (87 aa).

Residues 1–26 (MANHKSAIKRHKQSQKRAARNRAAKT) are disordered.

Belongs to the bacterial ribosomal protein bS20 family.

In terms of biological role, binds directly to 16S ribosomal RNA. This is Small ribosomal subunit protein bS20 from Nitratidesulfovibrio vulgaris (strain DSM 19637 / Miyazaki F) (Desulfovibrio vulgaris).